Here is a 255-residue protein sequence, read N- to C-terminus: MSATDASTADSGAKRKSSEDITHNCNANFGAENGLRKRVKSEEPVASIKDETNPEVPMKIKAEPVENADEPTSTTPAIKIKAEPADNGNSPAAAMVKTEPTNSNAQDAADESTVSSSSIRTSCRFGIRCYRRNPAHRSAEAHPGDQDYRRPNFPAPPLGTPACPFGNACYRRNPVHFQDYSHPADFNSAQNIRNRLRQRRAQRQNDDDSGTDEEDEPFGGDNDRDADYRPGADINEDEDDELEFDSQPISGDDYD.

Residues 1-11 show a composition bias toward low complexity; the sequence is MSATDASTADS. 3 disordered regions span residues 1 to 117, 131 to 168, and 195 to 255; these read MSAT…VSSS, RRNP…FGNA, and RLRQ…DDYD. Composition is skewed to basic and acidic residues over residues 12 to 22, 40 to 64, and 137 to 150; these read GAKRKSSEDIT, KSEE…KAEP, and RSAE…DYRR. PBZ-type zinc fingers lie at residues 121–142 and 161–182; these read TSCR…AEAH and PACP…DYSH. The span at 207-218 shows a compositional bias: acidic residues; that stretch reads DDSGTDEEDEPF. Positions 221-230 are enriched in basic and acidic residues; that stretch reads DNDRDADYRP. Positions 234–244 are enriched in acidic residues; that stretch reads INEDEDDELEF.

It belongs to the APLF family.

Displays apurinic-apyrimidinic (AP) endonuclease and 3'-5' exonuclease activities in vitro. This chain is Aprataxin and PNK-like factor, found in Drosophila melanogaster (Fruit fly).